The primary structure comprises 397 residues: Elongation factor Tu (397 aa).

Positions 10–207 (LPHVNVGTIG…TLDSYIPDPV (198 aa)) constitute a tr-type G domain. Residues 19 to 26 (GHVDHGKT) are G1. 19-26 (GHVDHGKT) contributes to the GTP binding site. Residue Thr-26 coordinates Mg(2+). The tract at residues 60 to 64 (GITIN) is G2. A G3 region spans residues 81 to 84 (DCPG). GTP is bound by residues 81–85 (DCPGH) and 136–139 (NKAD). Residues 136–139 (NKAD) are G4. Positions 174-176 (SAR) are G5.

Belongs to the TRAFAC class translation factor GTPase superfamily. Classic translation factor GTPase family. EF-Tu/EF-1A subfamily. In terms of assembly, monomer.

The protein resides in the cytoplasm. The enzyme catalyses GTP + H2O = GDP + phosphate + H(+). Its function is as follows. GTP hydrolase that promotes the GTP-dependent binding of aminoacyl-tRNA to the A-site of ribosomes during protein biosynthesis. In Pseudomonas fluorescens (strain SBW25), this protein is Elongation factor Tu.